A 95-amino-acid chain; its full sequence is Aspartyl/glutamyl-tRNA(Asn/Gln) amidotransferase subunit C (95 aa).

Belongs to the GatC family. In terms of assembly, heterotrimer of A, B and C subunits.

The catalysed reaction is L-glutamyl-tRNA(Gln) + L-glutamine + ATP + H2O = L-glutaminyl-tRNA(Gln) + L-glutamate + ADP + phosphate + H(+). It catalyses the reaction L-aspartyl-tRNA(Asn) + L-glutamine + ATP + H2O = L-asparaginyl-tRNA(Asn) + L-glutamate + ADP + phosphate + 2 H(+). Allows the formation of correctly charged Asn-tRNA(Asn) or Gln-tRNA(Gln) through the transamidation of misacylated Asp-tRNA(Asn) or Glu-tRNA(Gln) in organisms which lack either or both of asparaginyl-tRNA or glutaminyl-tRNA synthetases. The reaction takes place in the presence of glutamine and ATP through an activated phospho-Asp-tRNA(Asn) or phospho-Glu-tRNA(Gln). The sequence is that of Aspartyl/glutamyl-tRNA(Asn/Gln) amidotransferase subunit C from Ruegeria sp. (strain TM1040) (Silicibacter sp.).